A 333-amino-acid polypeptide reads, in one-letter code: uncharacterized protein (333 aa).

The Fe/B12 periplasmic-binding domain maps to 45-318 (NVIVSDSMFI…EYVKIIHPKI (274 aa)).

This is an uncharacterized protein from Methanocaldococcus jannaschii (strain ATCC 43067 / DSM 2661 / JAL-1 / JCM 10045 / NBRC 100440) (Methanococcus jannaschii).